The following is a 128-amino-acid chain: Large ribosomal subunit protein bL17 (128 aa).

The protein belongs to the bacterial ribosomal protein bL17 family. As to quaternary structure, part of the 50S ribosomal subunit. Contacts protein L32.

This Baumannia cicadellinicola subsp. Homalodisca coagulata protein is Large ribosomal subunit protein bL17.